Consider the following 466-residue polypeptide: Adenosylhomocysteinase (466 aa).

Substrate-binding residues include threonine 57, aspartate 132, and glutamate 192. Position 193-195 (193-195 (TTT)) interacts with NAD(+). Residues lysine 222 and aspartate 226 each contribute to the substrate site. NAD(+) is bound by residues asparagine 227, 256–261 (GYGDVG), glutamate 279, asparagine 314, 335–337 (IGH), and asparagine 380.

Belongs to the adenosylhomocysteinase family. NAD(+) serves as cofactor.

The protein localises to the cytoplasm. The catalysed reaction is S-adenosyl-L-homocysteine + H2O = L-homocysteine + adenosine. It functions in the pathway amino-acid biosynthesis; L-homocysteine biosynthesis; L-homocysteine from S-adenosyl-L-homocysteine: step 1/1. May play a key role in the regulation of the intracellular concentration of adenosylhomocysteine. In Brucella anthropi (strain ATCC 49188 / DSM 6882 / CCUG 24695 / JCM 21032 / LMG 3331 / NBRC 15819 / NCTC 12168 / Alc 37) (Ochrobactrum anthropi), this protein is Adenosylhomocysteinase.